A 281-amino-acid polypeptide reads, in one-letter code: ATP synthase subunit a (281 aa).

7 helical membrane passes run 56 to 76 (KPMLLALLGSIVIVGFFWAAF), 117 to 137 (LVVSLFFFVWMMNLWSIIPVA), 144 to 164 (IIAYPAVLAAIVYVTWITLTF), 181 to 201 (KSLGPVLPLAMLIEFFSNILI), 215 to 235 (FAGHTLLLLFTIASWYLLNGV), 237 to 257 (IAYAGVSFIMTVVMTAFELFI), and 259 to 279 (ALQAYVFVLLTCTYIQGAMAE).

It belongs to the ATPase A chain family. In terms of assembly, F-type ATPases have 2 components, CF(1) - the catalytic core - and CF(0) - the membrane proton channel. CF(1) has five subunits: alpha(3), beta(3), gamma(1), delta(1), epsilon(1). CF(0) has three main subunits: a(1), b(2) and c(9-12). The alpha and beta chains form an alternating ring which encloses part of the gamma chain. CF(1) is attached to CF(0) by a central stalk formed by the gamma and epsilon chains, while a peripheral stalk is formed by the delta and b chains.

It localises to the cell membrane. In terms of biological role, key component of the proton channel; it plays a direct role in the translocation of protons across the membrane. The polypeptide is ATP synthase subunit a (Streptomyces lividans).